The following is an 84-amino-acid chain: MKVTCMMIVAVLFLTAWTFVTADDSISALEDLFAKAHDKMENSEASPLNERDCRALGEYCGLPYVHNSRCCSQLCGFICVPESP.

A signal peptide spans 1–22 (MKVTCMMIVAVLFLTAWTFVTA). Positions 23–51 (DDSISALEDLFAKAHDKMENSEASPLNER) are excised as a propeptide. 3 disulfides stabilise this stretch: Cys-53–Cys-71, Cys-60–Cys-75, and Cys-70–Cys-79.

Belongs to the conotoxin O1 superfamily. Expressed by the venom duct.

Its subcellular location is the secreted. Functionally, omega-conotoxins act at presynaptic membranes, they bind and block voltage-gated calcium channels (Cav). The chain is Omega-conotoxin-like ArMKLT1-02 from Conus arenatus (Sand-dusted cone).